Reading from the N-terminus, the 628-residue chain is UvrABC system protein C (628 aa).

A GIY-YIG domain is found at 21–100 (TGPGIYQFKN…IKELKPRYNV (80 aa)). The region spanning 214 to 249 (AGLLKELHEKMLTAAAELRFEEAAELKMQLQSLRRY) is the UVR domain.

It belongs to the UvrC family. As to quaternary structure, interacts with UvrB in an incision complex.

The protein localises to the cytoplasm. In terms of biological role, the UvrABC repair system catalyzes the recognition and processing of DNA lesions. UvrC both incises the 5' and 3' sides of the lesion. The N-terminal half is responsible for the 3' incision and the C-terminal half is responsible for the 5' incision. The sequence is that of UvrABC system protein C from Chlorobium luteolum (strain DSM 273 / BCRC 81028 / 2530) (Pelodictyon luteolum).